The following is a 191-amino-acid chain: Ankyrin repeat domain-containing protein 22 (191 aa).

4 ANK repeats span residues 39 to 68 (NGDT…NVNL), 72 to 100 (KERT…MPVL), 101 to 130 (LIGY…EVNA), and 134 to 163 (YGCT…DPTI).

This Homo sapiens (Human) protein is Ankyrin repeat domain-containing protein 22 (ANKRD22).